We begin with the raw amino-acid sequence, 265 residues long: Phosphonates import ATP-binding protein PhnC 1 (265 aa).

One can recognise an ABC transporter domain in the interval 3-247 (LRLSAIELRH…HLDTLYANEQ (245 aa)). 36–43 (GPSGAGKT) lines the ATP pocket.

This sequence belongs to the ABC transporter superfamily. Phosphonates importer (TC 3.A.1.9.1) family. In terms of assembly, the complex is composed of two ATP-binding proteins (PhnC), two transmembrane proteins (PhnE) and a solute-binding protein (PhnD).

The protein localises to the cell inner membrane. It carries out the reaction phosphonate(out) + ATP + H2O = phosphonate(in) + ADP + phosphate + H(+). Its function is as follows. Part of the ABC transporter complex PhnCDE involved in phosphonates import. Responsible for energy coupling to the transport system. The chain is Phosphonates import ATP-binding protein PhnC 1 from Pseudomonas syringae pv. syringae (strain B728a).